Consider the following 815-residue polypeptide: Serotype-specific mannosyltransferase WbdA (815 aa).

The tract at residues 1–374 is alpha-(1-&gt;2)-mannosyltransferase; it reads MSRAIIENAG…WANTAHLAID (374 aa). The interval 431 to 804 is alpha-(1-&gt;3)-mannosyltransferase; that stretch reads KLLVDISVLA…WKQSAELLLK (374 aa).

The protein belongs to the glycosyltransferase group 1 family. Glycosyltransferase 4 subfamily.

The protein resides in the cell inner membrane. It functions in the pathway bacterial outer membrane biogenesis; LPS O-antigen biosynthesis. Its function is as follows. Mannosyltransferase involved in the biosynthesis of the repeat unit of the lipopolysaccharide (LPS) O-antigen region. This is Serotype-specific mannosyltransferase WbdA from Escherichia coli.